Reading from the N-terminus, the 262-residue chain is Indole-3-glycerol phosphate synthase (262 aa).

The protein belongs to the TrpC family.

The enzyme catalyses 1-(2-carboxyphenylamino)-1-deoxy-D-ribulose 5-phosphate + H(+) = (1S,2R)-1-C-(indol-3-yl)glycerol 3-phosphate + CO2 + H2O. It functions in the pathway amino-acid biosynthesis; L-tryptophan biosynthesis; L-tryptophan from chorismate: step 4/5. The sequence is that of Indole-3-glycerol phosphate synthase from Staphylococcus epidermidis (strain ATCC 35984 / DSM 28319 / BCRC 17069 / CCUG 31568 / BM 3577 / RP62A).